We begin with the raw amino-acid sequence, 515 residues long: Probable cytochrome P450 4p3 (515 aa).

Heme is bound by residues E322 and C461.

This sequence belongs to the cytochrome P450 family. Heme is required as a cofactor.

It is found in the endoplasmic reticulum membrane. The protein localises to the microsome membrane. May be involved in the metabolism of insect hormones and in the breakdown of synthetic insecticides. The polypeptide is Probable cytochrome P450 4p3 (Cyp4p3) (Drosophila melanogaster (Fruit fly)).